The following is a 338-amino-acid chain: Anthranilate phosphoribosyltransferase (338 aa).

5-phospho-alpha-D-ribose 1-diphosphate is bound by residues Gly80, Gly83–Asp84, Thr88, Asn90–Thr93, Lys108–Ser116, and Ser120. Gly80 lines the anthranilate pocket. Ser92 is a Mg(2+) binding site. Position 111 (Asn111) interacts with anthranilate. Anthranilate is bound at residue Arg166. Positions 225 and 226 each coordinate Mg(2+).

This sequence belongs to the anthranilate phosphoribosyltransferase family. In terms of assembly, homodimer. Mg(2+) serves as cofactor.

It carries out the reaction N-(5-phospho-beta-D-ribosyl)anthranilate + diphosphate = 5-phospho-alpha-D-ribose 1-diphosphate + anthranilate. Its pathway is amino-acid biosynthesis; L-tryptophan biosynthesis; L-tryptophan from chorismate: step 2/5. Functionally, catalyzes the transfer of the phosphoribosyl group of 5-phosphorylribose-1-pyrophosphate (PRPP) to anthranilate to yield N-(5'-phosphoribosyl)-anthranilate (PRA). This Herpetosiphon aurantiacus (strain ATCC 23779 / DSM 785 / 114-95) protein is Anthranilate phosphoribosyltransferase.